Reading from the N-terminus, the 687-residue chain is MKKADASARARELRDRIRAADHAYYVLDQPLLADAEYDRLMHELQALEAEHPELVTADSPTQRVSGAPSERFERVVHREPMLSLGNVQSDDELHEFDARVRRLLGLPDGEPVGYVVEPKLDGLAVELVYRDGAFTSGSTRGDGVNGEDVTANLRVVGGLGANRGVPHALEGRPPPRVEVRGEVLLFKEHFEAMNRQLVRAGEEPFANPRNAAAGTLRQLDWRVTARRPLSFIAYEALLPGGDPWRTHWEKLEELAAWGFETNAENRRCRGLAEVLAYRDRMAERRFELPYDTDGIVVKVDDLDWRRRLGAASKFPRWAVAFKYPPQEEATRIRRIWASVGRTGVLTPVVDFDPVRLSGAMVARATLHNEDEMRRKDILEGDWVLVRRAGEVIPEVVKPLPERRTGAEQPFRFPAECPVCGARVVREEGEKVYRCTGAACPAQLVGRLCHFAQRRALDIEGLGEKLAAGLVERGQVKDFADLYAVPFEVWQQLFSRPRKEQDAGAARELPEKSAQNMVAALERSRKTTLRRFLFALGIPQVGEATAATLARHFGDLARVMDADEEALKGVRDVGPETAAEIRAWTQEPQNRRVVERLLAAGVTPEAEVVEARGPFAGKTVVLTGGLSTMSRDDAKAEIERRGGKVSGSVSRKTYLVVAGEDAGSKLEKARSLGVRIAGEEEFVRLLKE.

NAD(+) contacts are provided by residues 34–38, 83–84, and Glu-117; these read DAEYD and SL. The active-site N6-AMP-lysine intermediate is Lys-119. Arg-140, Glu-182, Lys-298, and Lys-322 together coordinate NAD(+). Residues Cys-416, Cys-419, Cys-434, and Cys-439 each contribute to the Zn(2+) site. In terms of domain architecture, BRCT spans 609 to 687; that stretch reads EARGPFAGKT…EEEFVRLLKE (79 aa).

It belongs to the NAD-dependent DNA ligase family. LigA subfamily. Mg(2+) is required as a cofactor. The cofactor is Mn(2+).

The enzyme catalyses NAD(+) + (deoxyribonucleotide)n-3'-hydroxyl + 5'-phospho-(deoxyribonucleotide)m = (deoxyribonucleotide)n+m + AMP + beta-nicotinamide D-nucleotide.. In terms of biological role, DNA ligase that catalyzes the formation of phosphodiester linkages between 5'-phosphoryl and 3'-hydroxyl groups in double-stranded DNA using NAD as a coenzyme and as the energy source for the reaction. It is essential for DNA replication and repair of damaged DNA. The sequence is that of DNA ligase from Anaeromyxobacter dehalogenans (strain 2CP-1 / ATCC BAA-258).